The primary structure comprises 483 residues: Glutamyl-tRNA(Gln) amidotransferase subunit A (483 aa).

Active-site charge relay system residues include Lys-76 and Ser-151. Ser-175 serves as the catalytic Acyl-ester intermediate.

This sequence belongs to the amidase family. GatA subfamily. As to quaternary structure, heterotrimer of A, B and C subunits.

It carries out the reaction L-glutamyl-tRNA(Gln) + L-glutamine + ATP + H2O = L-glutaminyl-tRNA(Gln) + L-glutamate + ADP + phosphate + H(+). In terms of biological role, allows the formation of correctly charged Gln-tRNA(Gln) through the transamidation of misacylated Glu-tRNA(Gln) in organisms which lack glutaminyl-tRNA synthetase. The reaction takes place in the presence of glutamine and ATP through an activated gamma-phospho-Glu-tRNA(Gln). The polypeptide is Glutamyl-tRNA(Gln) amidotransferase subunit A (Pseudomonas savastanoi pv. phaseolicola (strain 1448A / Race 6) (Pseudomonas syringae pv. phaseolicola (strain 1448A / Race 6))).